A 380-amino-acid polypeptide reads, in one-letter code: Cytochrome b (380 aa).

The next 4 membrane-spanning stretches (helical) occupy residues 34–54 (FGSLLGICLLTQIMTGLLLAT), 78–99 (WLIRNLHANGASFFFICIYLHI), 114–134 (WNTGIILLLTLMATAFVGYVL), and 179–199 (FFALHFLLPFLIAGLTLIHLT). 2 residues coordinate heme b: His84 and His98. 2 residues coordinate heme b: His183 and His197. His202 serves as a coordination point for a ubiquinone. The next 4 helical transmembrane spans lie at 227–247 (LKDILGFMLMLLPLTTLALFS), 289–309 (LGGVLALAASVLILFLIPFLH), 321–341 (ISQLLFWTLVANLLILTWIGS), and 348–368 (FIIIGQLASLTYFLILLALFP).

It belongs to the cytochrome b family. The cytochrome bc1 complex contains 11 subunits: 3 respiratory subunits (MT-CYB, CYC1 and UQCRFS1), 2 core proteins (UQCRC1 and UQCRC2) and 6 low-molecular weight proteins (UQCRH/QCR6, UQCRB/QCR7, UQCRQ/QCR8, UQCR10/QCR9, UQCR11/QCR10 and a cleavage product of UQCRFS1). This cytochrome bc1 complex then forms a dimer. The cofactor is heme b.

It localises to the mitochondrion inner membrane. Its function is as follows. Component of the ubiquinol-cytochrome c reductase complex (complex III or cytochrome b-c1 complex) that is part of the mitochondrial respiratory chain. The b-c1 complex mediates electron transfer from ubiquinol to cytochrome c. Contributes to the generation of a proton gradient across the mitochondrial membrane that is then used for ATP synthesis. The sequence is that of Cytochrome b (MT-CYB) from Buteo buteo (Eurasian buzzard).